A 689-amino-acid polypeptide reads, in one-letter code: MTDKTFLVEIGTEELPPKALRSLAESFAANLTAELDAAGLAHGEVSWFAAPRRLALKVANLSAAQPDREVEKRGPAIQAAFDANGVATKAAEGWARGCGITVDQAERLSTDKGEWLMYRARVTGERTQVLLPAMIATSLAKLPIPKLMRWGASEVQFVRPVHTVTLLLGDELIPANILGIDSARIIRGHRFMGEPEFTIDHADQYPQILLERGKVQADYAARKAIIKADAEAAAAKIGGVADLSDSLLEEVTSLVEWPVVLTATFEEKFLAVPAEALVYTMKGDQKYFPVYDKAGKLLPNFIFVTNIESKDPQQIISGNEKVVRPRLADAEFFFNSDRKRRLEDNLPRLETVLFQKELGTLRAKTDRIQALAGWVAAQIGADVNHATRAGLLSKCDLMTNMVFEFTDTQGVMGMHYARHDGEAEDVAVALNEQYQPRFAGDELPSNPVACALAIADKMDTLAGIFGIGQHPKGDKDPFALRRAALGVLRIIVEKNLPLDLQTLTEEAVRLYGSKLSNAKAVDEVVDFMLGRFRTWYQEEGHSVDTLQAVLARRPTRPADFDARMKAVSHFRTLEQAASLAAANKRVSNILAKATEPLNDSVQASLLKENEEIKLATYVTALSSKLQPFFAEGRYQDALIELAQLREAVDNFFDKVMVNAEEKEVRINRLTLLAKLRELFLQVADISLLQ.

This sequence belongs to the class-II aminoacyl-tRNA synthetase family. Tetramer of two alpha and two beta subunits.

It localises to the cytoplasm. It carries out the reaction tRNA(Gly) + glycine + ATP = glycyl-tRNA(Gly) + AMP + diphosphate. This is Glycine--tRNA ligase beta subunit from Erwinia tasmaniensis (strain DSM 17950 / CFBP 7177 / CIP 109463 / NCPPB 4357 / Et1/99).